Here is a 298-residue protein sequence, read N- to C-terminus: Ribosomal protein L11 methyltransferase (298 aa).

Residues T152, G173, D195, and N234 each contribute to the S-adenosyl-L-methionine site.

It belongs to the methyltransferase superfamily. PrmA family.

Its subcellular location is the cytoplasm. The catalysed reaction is L-lysyl-[protein] + 3 S-adenosyl-L-methionine = N(6),N(6),N(6)-trimethyl-L-lysyl-[protein] + 3 S-adenosyl-L-homocysteine + 3 H(+). Its function is as follows. Methylates ribosomal protein L11. The chain is Ribosomal protein L11 methyltransferase from Ralstonia nicotianae (strain ATCC BAA-1114 / GMI1000) (Ralstonia solanacearum).